The chain runs to 204 residues: Guanylate kinase (204 aa).

A Guanylate kinase-like domain is found at 6 to 184 (GLLIVLSGPA…AVDRIKAIVT (179 aa)). Position 13-20 (13-20 (GPAGVGKG)) interacts with ATP.

The protein belongs to the guanylate kinase family.

Its subcellular location is the cytoplasm. The enzyme catalyses GMP + ATP = GDP + ADP. Its function is as follows. Essential for recycling GMP and indirectly, cGMP. The sequence is that of Guanylate kinase (gmk) from Halalkalibacterium halodurans (strain ATCC BAA-125 / DSM 18197 / FERM 7344 / JCM 9153 / C-125) (Bacillus halodurans).